A 328-amino-acid chain; its full sequence is Malate dehydrogenase (328 aa).

Residue 11-17 coordinates NAD(+); the sequence is GAAGQIG. Substrate-binding residues include R94 and R100. Residues N107, Q114, and 131–133 each bind NAD(+); that span reads VGN. 2 residues coordinate substrate: N133 and R164. H189 acts as the Proton acceptor in catalysis.

This sequence belongs to the LDH/MDH superfamily. MDH type 2 family.

It catalyses the reaction (S)-malate + NAD(+) = oxaloacetate + NADH + H(+). Functionally, catalyzes the reversible oxidation of malate to oxaloacetate. The polypeptide is Malate dehydrogenase (Xylella fastidiosa (strain Temecula1 / ATCC 700964)).